The chain runs to 353 residues: Cyanuric acid amidohydrolase (353 aa).

Positions 1 to 90 (MSSTALYTVP…NIFVRDERQY (90 aa)) are RU A. Residues Arg49 and 69-70 (SG) each bind substrate. Residues 96–231 (GLVTAVGRTR…CHILVVAESD (136 aa)) form an RU B region. Lys145 is a catalytic residue. Substrate-binding positions include Arg177 and 214-215 (SS). The Nucleophile role is filled by Ser214. The segment at 237-353 (LRAAHTAMRD…TANATGEASR (117 aa)) is RU C. A Mg(2+)-binding site is contributed by Glu275. Residues Arg302 and 321–322 (SG) contribute to the substrate site. Mg(2+)-binding residues include Ala324, Gln327, Gly328, Pro329, and Gly332.

The protein belongs to the cyclic amide hydrolase (CyAH) family. As to quaternary structure, homotetramer.

The catalysed reaction is cyanurate + H2O = 1-carboxybiuret + H(+). The protein operates within xenobiotic degradation; atrazine degradation; biuret from cyanurate: step 1/1. Its activity is regulated as follows. Inhibited by barbituric acid. In terms of biological role, responsible for the hydrolysis of cyanuric acid, an intermediate formed during catabolism of s-triazine based compounds in herbicides such as atrazine and polymers such as melamine. Catalyzes the hydrolytic opening of the s-triazine ring of cyanuric acid (2,4,6-trihydroxy-s-triazine) to yield carbon dioxide and carboxybiuret, which spontaneously decarboxylates to biuret. Required for growth on melamine or cyanuric acid as sole nitrogen source. The chain is Cyanuric acid amidohydrolase from Rhodococcus sp.